The sequence spans 321 residues: Tetraacyldisaccharide 4'-kinase (321 aa).

Position 54–61 (54–61 (SVGGTGKT)) interacts with ATP.

The protein belongs to the LpxK family.

The catalysed reaction is a lipid A disaccharide + ATP = a lipid IVA + ADP + H(+). The protein operates within glycolipid biosynthesis; lipid IV(A) biosynthesis; lipid IV(A) from (3R)-3-hydroxytetradecanoyl-[acyl-carrier-protein] and UDP-N-acetyl-alpha-D-glucosamine: step 6/6. Transfers the gamma-phosphate of ATP to the 4'-position of a tetraacyldisaccharide 1-phosphate intermediate (termed DS-1-P) to form tetraacyldisaccharide 1,4'-bis-phosphate (lipid IVA). The sequence is that of Tetraacyldisaccharide 4'-kinase from Rickettsia peacockii (strain Rustic).